The primary structure comprises 564 residues: Pyruvate decarboxylase (564 aa).

D28 and H115 together coordinate pyruvate. Thiamine diphosphate is bound by residues T390 and 413-415 (GSI). Residue D444 participates in Mg(2+) binding. Thiamine diphosphate is bound by residues 445 to 446 (GS) and 471 to 476 (NNGYTI). The Mg(2+) site is built by N471 and G473. Residue E477 participates in pyruvate binding.

This sequence belongs to the TPP enzyme family. As to quaternary structure, homotetramer. It depends on Mg(2+) as a cofactor. Requires thiamine diphosphate as cofactor.

It catalyses the reaction a 2-oxocarboxylate + H(+) = an aldehyde + CO2. It carries out the reaction pyruvate + H(+) = acetaldehyde + CO2. This Hanseniaspora uvarum (Yeast) protein is Pyruvate decarboxylase (PDC).